Here is a 1004-residue protein sequence, read N- to C-terminus: MSCYRKRHFLLWLLRAVCMLHLTARGAYATVGLQGVPTWIYLGLKSPFIEFGNQVEQLANSSIPLNMTKDEQANMHQEGLRKLGTFIKPVDLRDSETGFVKADLTKRLVFDRPNNITSRPIHPIQEEMDQKQIILLDEDTDENGLPASLTDEDRKFIVPMALKNISPDPRWAATTPSPSALQPNAKAISTIVPSPLAQVEGDPTSNIDDLKKHILFLHNMTKTNSNFESKFVKFPSLQKDKAKTSGAGGSPPNPKRPQRPIHQYSAPIAPPTPKVPAPDGGGVGGAAYNPGEQPIGGYYQNEELANNQSLLKPTDTDSHPAAGGSSHGQKNPSEPQVILLNETLSTETSIEADRSPSINQPKAGSPARTTKRPPCLRNPESPKCIRQRRREEQQRQRERDEWFRGQSQYMQPRFEPIIQTINNTKRFAVSIEIPDSFKVSSEGSDGELLSRVERSQPSISSSSSSSSSSSRKIMPDYIKVSMENNTSVTDYFKHDVVMTSADVASDREFLIKNMEEHGGAGSANSHHNDTTPTADAYSETIDLNPNNCYSAIGLSNSQKKQCVKHTSVMPAISRGARAAIQECQFQFKNRRWNCSTTNDETVFGPMTSLAAPEMAFIHALAAATVTSFIARACRDGQLASCSCSRGSRPKQLHDDWKWGGCGDNLEFAYKFATDFIDSREKETNRETRGVKRKREEINKNRMHSDDTNAFNIGIKRNKNVDAKNDTSLVVRNVRKSTEAENSHILNENFDQHLLELEQRITKEILTSKIDEEEMIKLQEKIKQEIVNTKFFKGEQQPRKKKRKNQRAAADAPAYPRNGIKESYKDGGILPRSTATVKARSLMNLHNNEAGRRAVIKKARITCKCHGVSGSCSLITCWQQLSSIREIGDYLREKYEGATKVKINKRGRLQIKDLQFKVPTAHDLIYLDESPDWCRNSYALHWPGTHGRVCHKNSSGLESCAILCCGRGYNTKNIIVNERCNCKFHWCCQVKCEVCTKVLEEHTCK.

The N-terminal stretch at 1-29 is a signal peptide; that stretch reads MSCYRKRHFLLWLLRAVCMLHLTARGAYA. 4 N-linked (GlcNAc...) asparagine glycosylation sites follow: asparagine 60, asparagine 66, asparagine 115, and asparagine 219. The interval 238–298 is disordered; that stretch reads QKDKAKTSGA…NPGEQPIGGY (61 aa). Residues asparagine 307 and asparagine 341 are each glycosylated (N-linked (GlcNAc...) asparagine). Residues 310–407 are disordered; sequence LLKPTDTDSH…ERDEWFRGQS (98 aa). The segment covering 389 to 403 has biased composition (basic and acidic residues); that stretch reads RREEQQRQRERDEWF. Asparagine 422 carries an N-linked (GlcNAc...) asparagine glycan. Positions 438–472 are disordered; it reads KVSSEGSDGELLSRVERSQPSISSSSSSSSSSSRK. The segment covering 458 to 470 has biased composition (low complexity); the sequence is SISSSSSSSSSSS. Asparagine 484, asparagine 485, asparagine 528, and asparagine 593 each carry an N-linked (GlcNAc...) asparagine glycan. Cystine bridges form between cysteine 583–cysteine 594, cysteine 633–cysteine 641, and cysteine 643–cysteine 661. Asparagine 724 is a glycosylation site (N-linked (GlcNAc...) asparagine). The tract at residues 790–822 is disordered; the sequence is FFKGEQQPRKKKRKNQRAAADAPAYPRNGIKES. 8 cysteine pairs are disulfide-bonded: cysteine 862–cysteine 876, cysteine 864–cysteine 871, cysteine 933–cysteine 964, cysteine 949–cysteine 959, cysteine 963–cysteine 1003, cysteine 979–cysteine 994, cysteine 981–cysteine 991, and cysteine 986–cysteine 987. A lipid anchor (O-palmitoleoyl serine; by PORCN) is attached at serine 868. Residue asparagine 952 is glycosylated (N-linked (GlcNAc...) asparagine).

It belongs to the Wnt family. As to quaternary structure, interacts with porcupine (por). Post-translationally, glycosylated, glycosylation is stimulated by porcupine at the ER. In terms of processing, palmitoleoylated by porcupine. The lipid group functions as a sorting signal, targeting the ligand to polarized vesicles that transport Wnt5 to unique sites at the cell surface. Depalmitoleoylated by notum, leading to inhibit Wnt signaling pathway. In terms of tissue distribution, dynamic expression pattern during embryogenesis. Expression is seen in the limb primordia of the head and thoracic segments, mesodermal and neurogenic regions.

It localises to the secreted. It is found in the extracellular space. The protein localises to the extracellular matrix. Functionally, binds as a ligand to a family of frizzled seven-transmembrane receptors and acts through a cascade of genes on the nucleus. Probable developmental protein. May be a signaling molecule which affects the development of discrete regions of tissues. Is likely to signal over only few cell diameters. May have a role in limb and CNS development; may be a downstream target of Dll that acts in the specification of these primordia. The polypeptide is Protein Wnt-5 (Wnt5) (Drosophila melanogaster (Fruit fly)).